The chain runs to 415 residues: Multidrug resistance protein MdtA (415 aa).

An N-terminal signal peptide occupies residues 1-21 (MKGSYKSRWVIVIVVVIAAIA). A compositionally biased stretch (polar residues) spans 31–47 (DSQSAAPGATKQAQQSP). Disordered stretches follow at residues 31 to 60 (DSQS…GPLA) and 392 to 415 (EAQS…GARS). Over residues 399 to 415 (PEEKATSREYAKKGARS) the composition is skewed to basic and acidic residues.

The protein belongs to the membrane fusion protein (MFP) (TC 8.A.1) family. Part of a tripartite efflux system composed of MdtA, MdtB and MdtC.

It is found in the cell inner membrane. In terms of biological role, the MdtABC tripartite complex confers resistance against novobiocin and deoxycholate. In Escherichia coli O8 (strain IAI1), this protein is Multidrug resistance protein MdtA.